The sequence spans 271 residues: MSDSHHTPEAASASLRHVRAKGEPRFPDGPKADPAGSHFERRIRSFQPRRSRVTAGQADALQRLWPLWGLDIDGRRVVDLAELFGNARPVVLEIGFGMGETTARMAAADPDTNILAADVHTPGQGNLLGLAERQELPNIRVANGDAIILLREMLAPGSLAGLRVYFPDPWPKKRHHKRRLIQPEFLTLAATRLAPGAVVHCATDWEPYAEQMLDVLTAHPDFENTVPGGGFAPRPEHRPLTRFEGQGLDKGHVVNDLLFRRVQHKEPPPNG.

The segment at 1–52 is disordered; sequence MSDSHHTPEAASASLRHVRAKGEPRFPDGPKADPAGSHFERRIRSFQPRRSR. Over residues 20–31 the composition is skewed to basic and acidic residues; that stretch reads AKGEPRFPDGPK. Residues Glu-93, Asp-118, Asp-145, and Asp-168 each coordinate S-adenosyl-L-methionine. Residue Asp-168 is part of the active site. Substrate contacts are provided by residues Lys-172, Asp-204, and 241–244; that span reads TRFE.

The protein belongs to the class I-like SAM-binding methyltransferase superfamily. TrmB family.

It carries out the reaction guanosine(46) in tRNA + S-adenosyl-L-methionine = N(7)-methylguanosine(46) in tRNA + S-adenosyl-L-homocysteine. Its pathway is tRNA modification; N(7)-methylguanine-tRNA biosynthesis. Catalyzes the formation of N(7)-methylguanine at position 46 (m7G46) in tRNA. In Streptomyces coelicolor (strain ATCC BAA-471 / A3(2) / M145), this protein is tRNA (guanine-N(7)-)-methyltransferase.